A 174-amino-acid chain; its full sequence is Guided entry of tail-anchored proteins factor 1 (174 aa).

Residues methionine 1–arginine 8 are Lumenal-facing. Residues tryptophan 9–proline 29 form a helical membrane-spanning segment. The Cytoplasmic portion of the chain corresponds to threonine 30–lysine 99. The stretch at leucine 39–threonine 94 forms a coiled coil. Residues leucine 39 to leucine 97 form an interaction with GET3/TRC40 region. Residues isoleucine 100–isoleucine 120 traverse the membrane as a helical segment. The Lumenal portion of the chain corresponds to tryptophan 121–arginine 148. The chain crosses the membrane as a helical span at residues valine 149 to isoleucine 169. The Cytoplasmic portion of the chain corresponds to leucine 170–serine 174.

It belongs to the WRB/GET1 family. In terms of assembly, component of the Golgi to ER traffic (GET) complex, which is composed of GET1, CAMLG/GET2 and GET3. Within the complex, GET1 and CAMLG form a heterotetramer which is stabilized by phosphatidylinositol binding and which binds to the GET3 homodimer. Interacts with CAMLG/GET2 (via C-terminus). GET3 shows a higher affinity for CAMLG than for GET1.

The protein resides in the endoplasmic reticulum membrane. Functionally, required for the post-translational delivery of tail-anchored (TA) proteins to the endoplasmic reticulum. Together with CAMLG/GET2, acts as a membrane receptor for soluble GET3/TRC40, which recognizes and selectively binds the transmembrane domain of TA proteins in the cytosol. Required to ensure correct topology and ER insertion of CAMLG. This chain is Guided entry of tail-anchored proteins factor 1, found in Rattus norvegicus (Rat).